The sequence spans 114 residues: UPF0757 protein YmgG (114 aa).

Belongs to the UPF0757 family.

The protein is UPF0757 protein YmgG of Escherichia fergusonii (strain ATCC 35469 / DSM 13698 / CCUG 18766 / IAM 14443 / JCM 21226 / LMG 7866 / NBRC 102419 / NCTC 12128 / CDC 0568-73).